A 934-amino-acid polypeptide reads, in one-letter code: Pesticidal crystal protein Cry1Aa (934 aa).

The protein belongs to the delta endotoxin family.

Its function is as follows. Promotes colloidosmotic lysis by binding to the midgut epithelial cells of many lepidopteran larvae. The protein is Pesticidal crystal protein Cry1Aa (cry1Aa) of Bacillus thuringiensis subsp. sotto.